Here is a 902-residue protein sequence, read N- to C-terminus: MVSLGGIARKLFGSANERRVRSYKSKIAAINALEEATKALSDEALAAKTAEFRQQLADGKTLDDLLIPAFAVAREASRRVLHMRPFDVQLTGAMILHGGAIAEMKTGEGKTLVATLAVYLNALAGKGVHVVTVNDYLAKRDAATMSKLYGFLGLTTGVIVHGLDDDQRREAYACDITYATNNELGFDYLRDNMKYDRAQMVQRGHNYAIVDEVDSILVDEARTPLIISGPLDDRSDLYNTIDAFIPLLSPEDYEIDEKQRSANFSEDGTEKLENLLRQAGLLKGESLYDIENVAIVHHINNALKAHKLFTRDKDYIVRNDEIVIIDEFTGRMMPGRRYSEGQHQALEAKEKVQIQPENQTLSSVTFQNYFRMYEKLAGMTGTASTEAEEFGNIYGLDVIEVPTNLPIQRIDEDDEVYRTGEEKFLAIITEIKAAHERGQPVLVGTTSIEKSELLAHMLRQSGFTDFQVLNARYHEQEAYIVSQAGVPGAVTIATNMAGRGTDIQLGGNVDMRLERELEGMEPGPELDAKEAAIRAEIKVLKEKALAAGGLYVIATERHESRRIDNQLRGRSGRQGDPGRSKFYLSLQDDLMRIFGSERMDSMLQKLGLKDGEAIVHPWINKALERAQKKVEARNFETRKNLLKYDDVLNDQRKVIFDQRLELMEADNIGETAADMRHEVIEALVTKHIPENAYAEQWDIAGLKAGIAQFLNLDLPVEEWAKEEGIAEDDILQRVTEAADTYAAERAERFGPEIMTYVERSVILQTIDHLWREHIVNLDHLRSVVGFRGYAQRDPLQEYKAEAFELFQSLLTNLREAVTAQLMRVELVQQEPQQPELPEMTAHHLDPVTGEDEMAQGVPAAFVPAEERDPNNPATWGRIGRNEMCPCGSGKKYKHCHGVYEQA.

ATP is bound by residues glutamine 89, 107 to 111 (GEGKT), and aspartate 502. Zn(2+) is bound by residues cysteine 884, cysteine 886, cysteine 895, and histidine 896.

Belongs to the SecA family. In terms of assembly, monomer and homodimer. Part of the essential Sec protein translocation apparatus which comprises SecA, SecYEG and auxiliary proteins SecDF-YajC and YidC. The cofactor is Zn(2+).

It is found in the cell inner membrane. The protein resides in the cytoplasm. It carries out the reaction ATP + H2O + cellular proteinSide 1 = ADP + phosphate + cellular proteinSide 2.. Part of the Sec protein translocase complex. Interacts with the SecYEG preprotein conducting channel. Has a central role in coupling the hydrolysis of ATP to the transfer of proteins into and across the cell membrane, serving both as a receptor for the preprotein-SecB complex and as an ATP-driven molecular motor driving the stepwise translocation of polypeptide chains across the membrane. The protein is Protein translocase subunit SecA of Agrobacterium fabrum (strain C58 / ATCC 33970) (Agrobacterium tumefaciens (strain C58)).